A 2157-amino-acid chain; its full sequence is Genome polyprotein (2157 aa).

Gly-2 carries the N-myristoyl glycine; by host lipid modification. The Cytoplasmic portion of the chain corresponds to 2-1470; the sequence is GAQVSRQNVG…DLNIANSIIA (1469 aa). The amphipathic alpha-helix stretch occupies residues 567 to 584; sequence PIEQNPVENYIDEVLNEV. Catalysis depends on for protease 2A activity residues His-875 and Asp-892. Positions 909 and 911 each coordinate Zn(2+). Cys-963 acts as the For protease 2A activity in catalysis. Residues Cys-969 and His-971 each contribute to the Zn(2+) site. Residues 1095–1164 form a membrane-binding region; it reads SDSWLKKFTE…NLRAADSATQ (70 aa). The oligomerization stretch occupies residues 1095–1228; the sequence is SDSWLKKFTE…PPGTGKSITT (134 aa). The RNA-binding stretch occupies residues 1116–1120; sequence GNKIS. In terms of domain architecture, SF3 helicase spans 1188 to 1350; sequence EAKRIKVLYN…YKDTQGKLDV (163 aa). Residues Cys-1357, Cys-1368, and Cys-1373 each contribute to the Zn(2+) site. The C4-type; degenerate zinc finger occupies 1357-1373; it reads CNVNTKIGNAKCCPFVC. The interval 1400 to 1407 is RNA-binding; the sequence is EDKRRRQV. Residues 1411–1416 form an oligomerization region; that stretch reads MSAIFQ. Residues 1471–1486 lie within the membrane without spanning it; the sequence is IIANIISIAGIIFVIY. The Cytoplasmic segment spans residues 1487–2157; sequence KLFCSLQGPY…LLKHEWYEKF (671 aa). Tyr-1496 carries the O-(5'-phospho-RNA)-tyrosine modification. Residues 1515 to 1693 form the Peptidase C3 domain; that stretch reads GPEEEFGRSI…FSAMLLRSYF (179 aa). Residues His-1554, Glu-1585, and Cys-1661 each act as for protease 3C activity in the active site. The RdRp catalytic domain maps to 1925–2038; sequence DCIMAFDYTN…SYKYTLDMEA (114 aa). Mg(2+) contacts are provided by Asp-1931 and Asp-2024.

Belongs to the picornaviruses polyprotein family. As to quaternary structure, interacts with capsid protein VP1 and capsid protein VP3 to form heterotrimeric protomers. In terms of assembly, interacts with capsid protein VP0, and capsid protein VP3 to form heterotrimeric protomers. Five protomers subsequently associate to form pentamers which serve as building blocks for the capsid. Interacts with capsid protein VP2, capsid protein VP3 and capsid protein VP4 following cleavage of capsid protein VP0. Interacts with capsid protein VP1 and capsid protein VP3 in the mature capsid. As to quaternary structure, interacts with capsid protein VP0 and capsid protein VP1 to form heterotrimeric protomers. Five protomers subsequently associate to form pentamers which serve as building blocks for the capsid. Interacts with capsid protein VP4 in the mature capsid. Interacts with protein 2C; this interaction may be important for virion morphogenesis. In terms of assembly, interacts with capsid protein VP1 and capsid protein VP3. Homodimer. As to quaternary structure, homohexamer; forms a hexameric ring structure with 6-fold symmetry characteristic of AAA+ ATPases. Interacts (via N-terminus) with host RTN3 (via reticulon domain); this interaction is important for viral replication. Interacts with capsid protein VP3; this interaction may be important for virion morphogenesis. In terms of assembly, interacts with protein 3CD. Homodimer. Interacts with host GBF1. Interacts (via GOLD domain) with host ACBD3 (via GOLD domain); this interaction allows the formation of a viral protein 3A/ACBD3 heterotetramer with a 2:2 stoichiometry, which will stimulate the recruitment of host PI4KB in order to synthesize PI4P at the viral RNA replication sites. As to quaternary structure, interacts with RNA-directed RNA polymerase. In terms of assembly, interacts with protein 3AB and with RNA-directed RNA polymerase. Interacts with Viral protein genome-linked and with protein 3CD. The cofactor is Mg(2+). In terms of processing, specific enzymatic cleavages in vivo by the viral proteases yield processing intermediates and the mature proteins. Myristoylation is required for the formation of pentamers during virus assembly. Further assembly of 12 pentamers and a molecule of genomic RNA generates the provirion. Post-translationally, during virion maturation, immature virions are rendered infectious following cleavage of VP0 into VP4 and VP2. This maturation seems to be an autocatalytic event triggered by the presence of RNA in the capsid and it is followed by a conformational change infectious virion. In terms of processing, myristoylation is required during RNA encapsidation and formation of the mature virus particle. VPg is uridylylated by the polymerase into VPg-pUpU. This acts as a nucleotide-peptide primer for the genomic RNA replication.

The protein resides in the virion. It localises to the host cytoplasm. It is found in the host cytoplasmic vesicle membrane. Its subcellular location is the host nucleus. It catalyses the reaction a ribonucleoside 5'-triphosphate + H2O = a ribonucleoside 5'-diphosphate + phosphate + H(+). The catalysed reaction is Selective cleavage of Tyr-|-Gly bond in the picornavirus polyprotein.. It carries out the reaction RNA(n) + a ribonucleoside 5'-triphosphate = RNA(n+1) + diphosphate. The enzyme catalyses Selective cleavage of Gln-|-Gly bond in the poliovirus polyprotein. In other picornavirus reactions Glu may be substituted for Gln, and Ser or Thr for Gly.. Replication or transcription is subject to high level of random mutations by the nucleotide analog ribavirin. Functionally, forms an icosahedral capsid of pseudo T=3 symmetry with capsid proteins VP2 and VP3. The capsid is 300 Angstroms in diameter, composed of 60 copies of each capsid protein and enclosing the viral positive strand RNA genome. Capsid protein VP1 mainly forms the vertices of the capsid. Capsid protein VP1 interacts with host cell receptor to provide virion attachment to target host cells. This attachment induces virion internalization. Tyrosine kinases are probably involved in the entry process. After binding to its receptor, the capsid undergoes conformational changes. Capsid protein VP1 N-terminus (that contains an amphipathic alpha-helix) and capsid protein VP4 are externalized. Together, they shape a pore in the host membrane through which viral genome is translocated to host cell cytoplasm. Forms an icosahedral capsid of pseudo T=3 symmetry with capsid proteins VP2 and VP3. The capsid is 300 Angstroms in diameter, composed of 60 copies of each capsid protein and enclosing the viral positive strand RNA genome. In terms of biological role, lies on the inner surface of the capsid shell. After binding to the host receptor, the capsid undergoes conformational changes. Capsid protein VP4 is released, Capsid protein VP1 N-terminus is externalized, and together, they shape a pore in the host membrane through which the viral genome is translocated into the host cell cytoplasm. Its function is as follows. Component of immature procapsids, which is cleaved into capsid proteins VP4 and VP2 after maturation. Allows the capsid to remain inactive before the maturation step. Functionally, cysteine protease that cleaves viral polyprotein and specific host proteins. It is responsible for the autocatalytic cleavage between the P1 and P2 regions, which is the first cleavage occurring in the polyprotein. Also cleaves the host translation initiation factor EIF4G1, in order to shut down the capped cellular mRNA translation. Inhibits the host nucleus-cytoplasm protein and RNA trafficking by cleaving host members of the nuclear pores. Counteracts stress granule formation probably by antagonizing its assembly or promoting its dissassembly. Plays an essential role in the virus replication cycle by acting as a viroporin. Creates a pore in the host endoplasmic reticulum and as a consequence releases Ca2+ in the cytoplasm of infected cell. In turn, high levels of cytoplasmic calcium may trigger membrane trafficking and transport of viral ER-associated proteins to viroplasms, sites of viral genome replication. In terms of biological role, induces and associates with structural rearrangements of intracellular membranes. Displays RNA-binding, nucleotide binding and NTPase activities. May play a role in virion morphogenesis and viral RNA encapsidation by interacting with the capsid protein VP3. Its function is as follows. Localizes the viral replication complex to the surface of membranous vesicles. Together with protein 3CD binds the Cis-Active RNA Element (CRE) which is involved in RNA synthesis initiation. Acts as a cofactor to stimulate the activity of 3D polymerase, maybe through a nucleid acid chaperone activity. Functionally, localizes the viral replication complex to the surface of membranous vesicles. It inhibits host cell endoplasmic reticulum-to-Golgi apparatus transport and causes the disassembly of the Golgi complex, possibly through GBF1 interaction. This would result in depletion of MHC, trail receptors and IFN receptors at the host cell surface. Plays an essential role in viral RNA replication by recruiting ACBD3 and PI4KB at the viral replication sites, thereby allowing the formation of the rearranged membranous structures where viral replication takes place. Acts as a primer for viral RNA replication and remains covalently bound to viral genomic RNA. VPg is uridylylated prior to priming replication into VPg-pUpU. The oriI viral genomic sequence may act as a template for this. The VPg-pUpU is then used as primer on the genomic RNA poly(A) by the RNA-dependent RNA polymerase to replicate the viral genome. During genome replication, the VPg-RNA linkage is removed by the host TDP2, thereby accelerating replication. During the late stage of the replication cycle, host TDP2 is excluded from sites of viral RNA synthesis and encapsidation, allowing for the generation of progeny virions. In terms of biological role, involved in the viral replication complex and viral polypeptide maturation. It exhibits protease activity with a specificity and catalytic efficiency that is different from protease 3C. Protein 3CD lacks polymerase activity. Protein 3CD binds to the 5'UTR of the viral genome. Its function is as follows. Major viral protease that mediates proteolytic processing of the polyprotein. Cleaves host EIF5B, contributing to host translation shutoff. Also cleaves host PABPC1, contributing to host translation shutoff. Functionally, replicates the viral genomic RNA on the surface of intracellular membranes. May form linear arrays of subunits that propagate along a strong head-to-tail interaction called interface-I. Covalently attaches UMP to a tyrosine of VPg, which is used to prime RNA synthesis. The positive stranded RNA genome is first replicated at virus induced membranous vesicles, creating a dsRNA genomic replication form. This dsRNA is then used as template to synthesize positive stranded RNA genomes. ss(+)RNA genomes are either translated, replicated or encapsidated. This is Genome polyprotein from Homo sapiens (Human).